A 327-amino-acid chain; its full sequence is GTPase Obg (327 aa).

The Obg domain occupies 2–160 (HLFKDSLNLI…LNLRLELSLI (159 aa)). Residues 161–326 (ADVGLVGLPN…LVSEFFSLAK (166 aa)) form the OBG-type G domain. GTP is bound by residues 167–174 (GLPNAGKS), 192–196 (FTTKI), 213–216 (DLPG), 280–283 (SKLD), and 307–309 (SIY). 2 residues coordinate Mg(2+): Ser-174 and Thr-194.

It belongs to the TRAFAC class OBG-HflX-like GTPase superfamily. OBG GTPase family. As to quaternary structure, monomer. The cofactor is Mg(2+).

The protein localises to the cytoplasm. In terms of biological role, an essential GTPase which binds GTP, GDP and possibly (p)ppGpp with moderate affinity, with high nucleotide exchange rates and a fairly low GTP hydrolysis rate. Plays a role in control of the cell cycle, stress response, ribosome biogenesis and in those bacteria that undergo differentiation, in morphogenesis control. The polypeptide is GTPase Obg (Borrelia recurrentis (strain A1)).